A 127-amino-acid chain; its full sequence is Protein translocase subunit SecE (127 aa).

Transmembrane regions (helical) follow at residues 17 to 37 (VKWISISIFFILSFFINMCFY), 41 to 61 (LFIRIFIISCLMLCAIGTMIY), and 95 to 115 (FIVISVTIFISFILWSIDSVI).

Belongs to the SecE/SEC61-gamma family. Component of the Sec protein translocase complex. Heterotrimer consisting of SecY, SecE and SecG subunits. The heterotrimers can form oligomers, although 1 heterotrimer is thought to be able to translocate proteins. Interacts with the ribosome. Interacts with SecDF, and other proteins may be involved. Interacts with SecA.

It localises to the cell inner membrane. Its function is as follows. Essential subunit of the Sec protein translocation channel SecYEG. Clamps together the 2 halves of SecY. May contact the channel plug during translocation. The sequence is that of Protein translocase subunit SecE from Buchnera aphidicola subsp. Acyrthosiphon pisum (strain APS) (Acyrthosiphon pisum symbiotic bacterium).